The sequence spans 159 residues: Mating-type P-specific polypeptide Pi (159 aa).

The segment at residues 103–159 (MTTVRGQCSKCTKPHLMRWLLLHYDNPYPSNSEFYDLSAATGLTRTQLRNWFSNRRR) is a DNA-binding region (homeobox; TALE-type; partial).

Belongs to the TALE/M-ATYP homeobox family.

The protein resides in the nucleus. In terms of biological role, mating type proteins are sequence specific DNA-binding proteins that act as master switches in yeast differentiation by controlling gene expression in a cell type-specific fashion. Required for meiosis, but plays no role in conjugation. This chain is Mating-type P-specific polypeptide Pi (matPi), found in Schizosaccharomyces kambucha (Fission yeast).